Consider the following 430-residue polypeptide: tRNA-2-methylthio-N(6)-dimethylallyladenosine synthase (430 aa).

An MTTase N-terminal domain is found at 2–111 (KKIHIKTYGC…IPQAVERAIN (110 aa)). [4Fe-4S] cluster is bound by residues C11, C47, C76, C147, C151, and C154. A Radical SAM core domain is found at 133-364 (RNSKHHAWIT…LNLQKEINKQ (232 aa)). The TRAM domain maps to 367–428 (ENYLNKTVEI…AGPLYGDIIK (62 aa)).

It belongs to the methylthiotransferase family. MiaB subfamily. In terms of assembly, monomer. Requires [4Fe-4S] cluster as cofactor.

The protein resides in the cytoplasm. The catalysed reaction is N(6)-dimethylallyladenosine(37) in tRNA + (sulfur carrier)-SH + AH2 + 2 S-adenosyl-L-methionine = 2-methylsulfanyl-N(6)-dimethylallyladenosine(37) in tRNA + (sulfur carrier)-H + 5'-deoxyadenosine + L-methionine + A + S-adenosyl-L-homocysteine + 2 H(+). Functionally, catalyzes the methylthiolation of N6-(dimethylallyl)adenosine (i(6)A), leading to the formation of 2-methylthio-N6-(dimethylallyl)adenosine (ms(2)i(6)A) at position 37 in tRNAs that read codons beginning with uridine. The polypeptide is tRNA-2-methylthio-N(6)-dimethylallyladenosine synthase (Thermosipho melanesiensis (strain DSM 12029 / CIP 104789 / BI429)).